A 145-amino-acid polypeptide reads, in one-letter code: Large ribosomal subunit protein uL16 (145 aa).

Positions 1 to 21 (MLVPTRVKHRKQHRGRMHGKA) are enriched in basic residues. Residues 1–22 (MLVPTRVKHRKQHRGRMHGKAT) are disordered.

It belongs to the universal ribosomal protein uL16 family. As to quaternary structure, part of the 50S ribosomal subunit.

Its function is as follows. Binds 23S rRNA and is also seen to make contacts with the A and possibly P site tRNAs. The chain is Large ribosomal subunit protein uL16 from Desulfitobacterium hafniense (strain Y51).